The chain runs to 136 residues: Secreted RxLR effector protein 15 (136 aa).

A signal peptide spans 1–22 (MRGHSALMMAVVTLAAVSSGAA). Positions 47–50 (RLLR) match the RxLR motif.

Belongs to the RxLR effector family.

It is found in the secreted. It localises to the host nucleus. Its subcellular location is the host cytoplasm. Its function is as follows. Effector that completely suppresses the host cell death induced by cell death-inducing proteins. This chain is Secreted RxLR effector protein 15, found in Plasmopara viticola (Downy mildew of grapevine).